The primary structure comprises 142 residues: HTH-type transcriptional regulator MntR (142 aa).

In terms of domain architecture, HTH dtxR-type spans 1–63 (MPTPSMEDYI…YEKYRGLILT (63 aa)). Residues aspartate 8, glutamate 11, histidine 77, glutamate 99, glutamate 102, and histidine 103 each coordinate Mn(2+).

It belongs to the DtxR/MntR family. Homodimer.

It localises to the cytoplasm. With respect to regulation, DNA binding is strongly activated by Mn(2+). Central regulator of manganese homeostasis. In Listeria innocua serovar 6a (strain ATCC BAA-680 / CLIP 11262), this protein is HTH-type transcriptional regulator MntR.